We begin with the raw amino-acid sequence, 342 residues long: Galactose mutarotase (342 aa).

Ser-14 is subject to Phosphoserine. Beta-D-galactose is bound by residues 81-82 (NR) and His-107. A Phosphoserine modification is found at Ser-124. Catalysis depends on His-176, which acts as the Proton donor. Beta-D-galactose-binding positions include 176 to 178 (HSY), Asp-243, Gln-279, and Glu-307. The Proton acceptor role is filled by Glu-307.

Belongs to the aldose epimerase family. Monomer.

The protein localises to the cytoplasm. The enzyme catalyses alpha-D-galactose = beta-D-galactose. It catalyses the reaction alpha-D-glucose = beta-D-glucose. It participates in carbohydrate metabolism; hexose metabolism. The protein operates within carbohydrate metabolism; galactose metabolism. In terms of biological role, mutarotase that catalyzes the interconversion of beta-D-galactose and alpha-D-galactose during galactose metabolism. Beta-D-galactose is metabolized in the liver into glucose 1-phosphate, the primary metabolic fuel, by the action of four enzymes that constitute the Leloir pathway: GALM, GALK1 (galactokinase), GALT (galactose-1-phosphate uridylyltransferase) and GALE (UDP-galactose-4'-epimerase). Involved in the maintenance of the equilibrium between the beta- and alpha-anomers of galactose, therefore ensuring a sufficient supply of the alpha-anomer for GALK1. Also active on D-glucose although shows a preference for galactose over glucose. This is Galactose mutarotase (GALM) from Sus scrofa (Pig).